We begin with the raw amino-acid sequence, 1398 residues long: Pyrolysin (1398 aa).

Residues methionine 1–alanine 26 form the signal peptide. Residues glycine 27–lysine 149 constitute a propeptide that is removed on maturation. Asparagine 152 carries N-linked (GlcNAc...) asparagine glycosylation. A Peptidase S8 domain is found at threonine 154–tryptophan 656. Aspartate 179 (charge relay system) is an active-site residue. 7 N-linked (GlcNAc...) asparagine glycosylation sites follow: asparagine 222, asparagine 228, asparagine 240, asparagine 257, asparagine 262, asparagine 298, and asparagine 327. Catalysis depends on histidine 365, which acts as the Charge relay system. Asparagine 406 carries an N-linked (GlcNAc...) asparagine glycan. The Charge relay system role is filled by serine 590. 19 N-linked (GlcNAc...) asparagine glycosylation sites follow: asparagine 651, asparagine 663, asparagine 739, asparagine 792, asparagine 893, asparagine 908, asparagine 917, asparagine 929, asparagine 1048, asparagine 1056, asparagine 1084, asparagine 1117, asparagine 1133, asparagine 1140, asparagine 1148, asparagine 1208, asparagine 1233, asparagine 1237, and asparagine 1332.

It belongs to the peptidase S8 family. LWM pyrolysin seems to be produced by autoproteolytic activation of HMW pyrolysin. Post-translationally, glycosylated.

Its subcellular location is the cell envelope. Functionally, has endopeptidase activity toward caseins, casein fragments including alpha-S1-casein and synthetic peptides. This is Pyrolysin (pls) from Pyrococcus furiosus (strain ATCC 43587 / DSM 3638 / JCM 8422 / Vc1).